A 222-amino-acid chain; its full sequence is Adenylate kinase (222 aa).

A propeptide (removed in mature form) is located at residue serine 2. Serine 2 and serine 3 each carry N-acetylserine. 16-21 (GAGKGT) is an ATP binding site. Positions 36–65 (ATGDMLRSQIAKGTQLGLEAKKIMDQGGLV) are NMP. Residues threonine 37, arginine 42, 63–65 (GLV), 92–95 (GFPR), and glutamine 99 each bind AMP. Residues 133-170 (GRLIHPASGRSYHKIFNPPKEDMKDDVTGEALVQRSDD) are LID. ATP-binding positions include arginine 134 and 143-144 (SY). Residues arginine 167 and arginine 178 each coordinate AMP. ATP is bound at residue glutamine 206.

The protein belongs to the adenylate kinase family. AK2 subfamily. Monomer.

It localises to the cytoplasm. Its subcellular location is the cytosol. The protein resides in the mitochondrion intermembrane space. It carries out the reaction AMP + ATP = 2 ADP. Catalyzes the reversible transfer of the terminal phosphate group between ATP and AMP. Plays an important role in cellular energy homeostasis and in adenine nucleotide metabolism. Adenylate kinase activity is critical for regulation of the phosphate utilization and the AMP de novo biosynthesis pathways. The protein is Adenylate kinase of Saccharomyces cerevisiae (strain RM11-1a) (Baker's yeast).